The following is a 98-amino-acid chain: MALTKAEMAEHLFETLGINKRVAKEMVEAFFEEIRQALENGEQVKLSGFGNFDLRDKNQRPGRNPKTGEDIPISARRVVTFRPGQKLKSRVEEANAGK.

A disordered region spans residues 49–72 (FGNFDLRDKNQRPGRNPKTGEDIP).

The protein belongs to the bacterial histone-like protein family. In terms of assembly, heterodimer of an alpha and a beta chain.

Functionally, this protein is one of the two subunits of integration host factor, a specific DNA-binding protein that functions in genetic recombination as well as in transcriptional and translational control. The protein is Integration host factor subunit alpha of Shewanella loihica (strain ATCC BAA-1088 / PV-4).